A 232-amino-acid chain; its full sequence is Sugar fermentation stimulation protein homolog (232 aa).

It belongs to the SfsA family.

The protein is Sugar fermentation stimulation protein homolog of Shouchella clausii (strain KSM-K16) (Alkalihalobacillus clausii).